The following is a 320-amino-acid chain: tRNA U34 carboxymethyltransferase (320 aa).

Carboxy-S-adenosyl-L-methionine-binding positions include K89, W103, K108, G128, 150–152, 179–180, M194, Y198, and R313; these read DPT and LE.

Belongs to the class I-like SAM-binding methyltransferase superfamily. CmoB family. In terms of assembly, homotetramer.

The catalysed reaction is carboxy-S-adenosyl-L-methionine + 5-hydroxyuridine(34) in tRNA = 5-carboxymethoxyuridine(34) in tRNA + S-adenosyl-L-homocysteine + H(+). Its function is as follows. Catalyzes carboxymethyl transfer from carboxy-S-adenosyl-L-methionine (Cx-SAM) to 5-hydroxyuridine (ho5U) to form 5-carboxymethoxyuridine (cmo5U) at position 34 in tRNAs. The chain is tRNA U34 carboxymethyltransferase from Haemophilus ducreyi (strain 35000HP / ATCC 700724).